Reading from the N-terminus, the 305-residue chain is UDP-3-O-acyl-N-acetylglucosamine deacetylase (305 aa).

Zn(2+)-binding residues include H79, H238, and D242. The active-site Proton donor is the H265.

It belongs to the LpxC family. Requires Zn(2+) as cofactor.

It carries out the reaction a UDP-3-O-[(3R)-3-hydroxyacyl]-N-acetyl-alpha-D-glucosamine + H2O = a UDP-3-O-[(3R)-3-hydroxyacyl]-alpha-D-glucosamine + acetate. It participates in glycolipid biosynthesis; lipid IV(A) biosynthesis; lipid IV(A) from (3R)-3-hydroxytetradecanoyl-[acyl-carrier-protein] and UDP-N-acetyl-alpha-D-glucosamine: step 2/6. In terms of biological role, catalyzes the hydrolysis of UDP-3-O-myristoyl-N-acetylglucosamine to form UDP-3-O-myristoylglucosamine and acetate, the committed step in lipid A biosynthesis. The sequence is that of UDP-3-O-acyl-N-acetylglucosamine deacetylase from Vibrio vulnificus (strain CMCP6).